The following is a 319-amino-acid chain: RNA polymerase II holoenzyme cyclin-like subunit (319 aa).

Residues 53 to 142 (QQLIRLAKRL…LGECEFFMIS (90 aa)) enclose the Cyclin N-terminal domain. The span at 237-251 (QGQQAQGGMPEPAAA) shows a compositional bias: low complexity. Residues 237–261 (QGQQAQGGMPEPAAAEPKEKRQQDR) are disordered. Positions 252–261 (EPKEKRQQDR) are enriched in basic and acidic residues.

This sequence belongs to the cyclin family. Cyclin C subfamily. In terms of assembly, component of the SRB8-11 complex, a regulatory module of the Mediator complex. Interacts with SSN3/FCK1.

It is found in the nucleus. In terms of biological role, component of the SRB8-11 complex. The SRB8-11 complex is a regulatory module of the Mediator complex which is itself involved in regulation of basal and activated RNA polymerase II-dependent transcription. The SRB8-11 complex may be involved in the transcriptional repression of a subset of genes regulated by Mediator. It may inhibit the association of the Mediator complex with RNA polymerase II to form the holoenzyme complex. The SRB8-11 complex phosphorylates the C-terminal domain (CTD) of the largest subunit of RNA polymerase II. May play a role in signal transduction pathways regulating secondary metabolism and fungal development (conidiation). This is RNA polymerase II holoenzyme cyclin-like subunit (SSN8) from Gibberella moniliformis (Maize ear and stalk rot fungus).